Here is a 152-residue protein sequence, read N- to C-terminus: MSAIVDLQVASDAANLPSADDFQRWLNAVLAHQQLSEHELTVRIVETQESQELNLTYRGKDKPTNVLSFPFEAPPGLSLNLLGDLVVCADVVAHEADEQHKKLHHHWAHMIVHGALHLLGFDHINDDEAKEMEALEVDILKQFSIDDPYQDQ.

Residues H113, H117, and H123 each coordinate Zn(2+).

Belongs to the endoribonuclease YbeY family. The cofactor is Zn(2+).

The protein localises to the cytoplasm. Functionally, single strand-specific metallo-endoribonuclease involved in late-stage 70S ribosome quality control and in maturation of the 3' terminus of the 16S rRNA. The polypeptide is Endoribonuclease YbeY (Pseudoalteromonas atlantica (strain T6c / ATCC BAA-1087)).